The primary structure comprises 286 residues: Pantothenate synthetase (286 aa).

30–37 (MGNLHAGH) is a binding site for ATP. Catalysis depends on histidine 37, which acts as the Proton donor. Glutamine 61 serves as a coordination point for (R)-pantoate. Position 61 (glutamine 61) interacts with beta-alanine. Residue 149 to 152 (GEKD) participates in ATP binding. Glutamine 155 serves as a coordination point for (R)-pantoate. ATP contacts are provided by residues valine 178 and 186–189 (MSSR).

Belongs to the pantothenate synthetase family. As to quaternary structure, homodimer.

Its subcellular location is the cytoplasm. The enzyme catalyses (R)-pantoate + beta-alanine + ATP = (R)-pantothenate + AMP + diphosphate + H(+). The protein operates within cofactor biosynthesis; (R)-pantothenate biosynthesis; (R)-pantothenate from (R)-pantoate and beta-alanine: step 1/1. Its function is as follows. Catalyzes the condensation of pantoate with beta-alanine in an ATP-dependent reaction via a pantoyl-adenylate intermediate. This is Pantothenate synthetase from Thioalkalivibrio sulfidiphilus (strain HL-EbGR7).